Reading from the N-terminus, the 116-residue chain is Large ribosomal subunit protein uL24 (116 aa).

The interval 1-27 (MAGRKSSTPTRHKMHVKTGDTVQVISG) is disordered.

The protein belongs to the universal ribosomal protein uL24 family. In terms of assembly, part of the 50S ribosomal subunit.

Its function is as follows. One of two assembly initiator proteins, it binds directly to the 5'-end of the 23S rRNA, where it nucleates assembly of the 50S subunit. One of the proteins that surrounds the polypeptide exit tunnel on the outside of the subunit. This chain is Large ribosomal subunit protein uL24, found in Picosynechococcus sp. (strain ATCC 27264 / PCC 7002 / PR-6) (Agmenellum quadruplicatum).